We begin with the raw amino-acid sequence, 304 residues long: Ribosomal RNA small subunit methyltransferase H (304 aa).

S-adenosyl-L-methionine contacts are provided by residues 47 to 49, Asp66, Phe93, Asp108, and Gln115; that span reads GGH.

This sequence belongs to the methyltransferase superfamily. RsmH family.

It is found in the cytoplasm. It catalyses the reaction cytidine(1402) in 16S rRNA + S-adenosyl-L-methionine = N(4)-methylcytidine(1402) in 16S rRNA + S-adenosyl-L-homocysteine + H(+). Specifically methylates the N4 position of cytidine in position 1402 (C1402) of 16S rRNA. This is Ribosomal RNA small subunit methyltransferase H from Prochlorococcus marinus (strain NATL1A).